The following is a 53-amino-acid chain: Conotoxin Cal22e (53 aa).

Residues 1–5 (GRPSA) constitute a propeptide that is removed on maturation.

In terms of processing, contains 4 disulfide bonds. In terms of tissue distribution, expressed by the venom duct.

The protein localises to the secreted. In terms of biological role, probable neurotoxin with unknown target. Possibly targets ion channels. The polypeptide is Conotoxin Cal22e (Californiconus californicus (California cone)).